A 282-amino-acid polypeptide reads, in one-letter code: Nucleotide-binding protein XCC2806 (282 aa).

5 to 12 is a binding site for ATP; it reads GLSGSGKS. 57–60 serves as a coordination point for GTP; the sequence is DVRS.

The protein belongs to the RapZ-like family.

Displays ATPase and GTPase activities. This is Nucleotide-binding protein XCC2806 from Xanthomonas campestris pv. campestris (strain ATCC 33913 / DSM 3586 / NCPPB 528 / LMG 568 / P 25).